A 214-amino-acid chain; its full sequence is Ribonuclease T (214 aa).

An Exonuclease domain is found at 20–195 (VVVDVETAGF…YDTQKTAELF (176 aa)). D23, E25, H182, and D187 together coordinate Mg(2+). H182 acts as the Proton donor/acceptor in catalysis.

It belongs to the RNase T family. Homodimer. It depends on Mg(2+) as a cofactor.

Trims short 3' overhangs of a variety of RNA species, leaving a one or two nucleotide 3' overhang. Responsible for the end-turnover of tRNA: specifically removes the terminal AMP residue from uncharged tRNA (tRNA-C-C-A). Also appears to be involved in tRNA biosynthesis. The protein is Ribonuclease T of Vibrio parahaemolyticus serotype O3:K6 (strain RIMD 2210633).